Here is a 67-residue protein sequence, read N- to C-terminus: Large ribosomal subunit protein bL31 (67 aa).

Cys16, Cys18, Cys36, and Cys39 together coordinate Zn(2+).

It belongs to the bacterial ribosomal protein bL31 family. Type A subfamily. Part of the 50S ribosomal subunit. The cofactor is Zn(2+).

In terms of biological role, binds the 23S rRNA. This Treponema pallidum (strain Nichols) protein is Large ribosomal subunit protein bL31.